The chain runs to 311 residues: Glutaminase (311 aa).

Positions 69, 120, 164, 171, 195, 247, and 265 each coordinate substrate.

Belongs to the glutaminase family. In terms of assembly, homotetramer.

It carries out the reaction L-glutamine + H2O = L-glutamate + NH4(+). This chain is Glutaminase, found in Colwellia psychrerythraea (strain 34H / ATCC BAA-681) (Vibrio psychroerythus).